Consider the following 671-residue polypeptide: Sodium, potassium, lithium and rubidium/H(+) antiporter (671 aa).

11 consecutive transmembrane segments (helical) span residues 7 to 29 (VLVL…FIPV), 46 to 66 (GLHI…PLLF), 83 to 103 (PILL…GYTI), 110 to 130 (IPLP…VVAV), 156 to 176 (ASGL…AFSI), 182 to 202 (SFVL…FFII), 228 to 248 (FVIY…VVAG), 276 to 296 (IILF…IPDV), 315 to 335 (ILII…LFWA), 364 to 384 (GAVT…GSPF), and 389 to 409 (LIIF…SVLL).

The protein belongs to the monovalent cation:proton antiporter 1 (CPA1) transporter (TC 2.A.36) family. Nhak (TC 2.A.36.3.2) subfamily.

It is found in the cell membrane. Transporter involved in the efflux of sodium, potassium, lithium and rubidium. The protein is Sodium, potassium, lithium and rubidium/H(+) antiporter (nhaK) of Bacillus pumilus (strain SAFR-032).